Here is a 146-residue protein sequence, read N- to C-terminus: Anti-sigma F factor (146 aa).

This sequence belongs to the anti-sigma-factor family.

The catalysed reaction is L-seryl-[protein] + ATP = O-phospho-L-seryl-[protein] + ADP + H(+). It carries out the reaction L-threonyl-[protein] + ATP = O-phospho-L-threonyl-[protein] + ADP + H(+). Its function is as follows. Binds to sigma F and blocks its ability to form an RNA polymerase holoenzyme (E-sigma F). Phosphorylates SpoIIAA on a serine residue. This phosphorylation may enable SpoIIAA to act as an anti-anti-sigma factor that counteracts SpoIIAB and thus releases sigma F from inhibition. The protein is Anti-sigma F factor of Bacillus velezensis (strain DSM 23117 / BGSC 10A6 / LMG 26770 / FZB42) (Bacillus amyloliquefaciens subsp. plantarum).